We begin with the raw amino-acid sequence, 334 residues long: Phosphate acyltransferase (334 aa).

This sequence belongs to the PlsX family. As to quaternary structure, homodimer. Probably interacts with PlsY.

It is found in the cytoplasm. The enzyme catalyses a fatty acyl-[ACP] + phosphate = an acyl phosphate + holo-[ACP]. It participates in lipid metabolism; phospholipid metabolism. Its function is as follows. Catalyzes the reversible formation of acyl-phosphate (acyl-PO(4)) from acyl-[acyl-carrier-protein] (acyl-ACP). This enzyme utilizes acyl-ACP as fatty acyl donor, but not acyl-CoA. The protein is Phosphate acyltransferase of Mycoplasma capricolum subsp. capricolum (strain California kid / ATCC 27343 / NCTC 10154).